A 344-amino-acid chain; its full sequence is Ubiquitin-associated domain-containing protein 2 (344 aa).

An N-terminal signal peptide occupies residues 1-35; sequence MFTSTGSSGLYKAPLSKSLLLVPSALSLLLALLLP. Residues 36–91 lie on the Extracellular side of the membrane; it reads HCQKLFVYDLHAVKNDFQIWRLICGRIICLDLKDTFCSSLLIYNFRIFERRYGSRK. The chain crosses the membrane as a helical span at residues 92-112; the sequence is FASFLLGSWVLSALFDFLLIE. The Cytoplasmic portion of the chain corresponds to 113–125; sequence AMQYFFGITAASN. Residues 126 to 146 traverse the membrane as a helical segment; that stretch reads LPSGFLAPVFALFVPFYCSIP. At 147–163 the chain is on the extracellular side; sequence RVQVAQILGPLSITNKT. Residue asparagine 161 is glycosylated (N-linked (GlcNAc...) asparagine). Residues 164 to 184 traverse the membrane as a helical segment; that stretch reads LIYILGLQLFTSGSYIWIVAI. The Cytoplasmic segment spans residues 185 to 344; that stretch reads SGLMSGLCYD…NVATNFLLQH (160 aa). The region spanning 304-344 is the UBA domain; sequence EVSEEQVARLMEMGFSRGDALEALRASNNDLNVATNFLLQH.

Interacts with FAF2. Interacts with LMBR1L. Interacts with AMFR and VCP.

The protein resides in the endoplasmic reticulum membrane. Its function is as follows. Restricts trafficking of FAF2 from the endoplasmic reticulum to lipid droplets. In association with LMBR1L and E3 ubiquitin-protein ligase AMFR, negatively regulates the canonical Wnt signaling pathway in the lymphocytes by promoting the ubiquitin-mediated degradation of CTNNB1 and Wnt receptors FZD6 and LRP6. This is Ubiquitin-associated domain-containing protein 2 (UBAC2) from Homo sapiens (Human).